A 175-amino-acid chain; its full sequence is Glycine-rich RNA-binding protein 1 (175 aa).

Residues 3–81 (AKVYVGNLSW…RRIRVNMANS (79 aa)) form the RRM domain. The interval 114 to 175 (GQPGGFQQPG…GYGGYNGQSQ (62 aa)) is disordered. Low complexity predominate over residues 122–131 (PGGFQQQGGY). The span at 132–141 (PQQGGYGGYQ) shows a compositional bias: gly residues. The span at 142–162 (QPGFQPQQGGYGAPQQGYGAP) shows a compositional bias: low complexity. Over residues 163–175 (QQGGYGGYNGQSQ) the composition is skewed to gly residues.

The protein belongs to the glycine-rich RNA-binding protein family. In terms of assembly, part of large ribonucleoprotein complexes (mRNPs) containing RNA-binding proteins RRM4 and PAB1, endosome-binding protein UPA1, core scaffold protein UPA2 and associated factor GRP1.

Its subcellular location is the endosome. In terms of biological role, component of endosomal mRNA transport that regulates polarity of the infectious hyphae by transporting a broad spectrum of cargo mRNAs from the nucleus to cell poles. The protein is Glycine-rich RNA-binding protein 1 of Mycosarcoma maydis (Corn smut fungus).